The following is a 282-amino-acid chain: Phosphoglycerate mutase-like protein 1 (282 aa).

His-23 (tele-phosphohistidine intermediate) is an active-site residue. Glu-135 serves as the catalytic Proton donor/acceptor.

This sequence belongs to the phosphoglycerate mutase family.

Its function is as follows. May play a role in carbohydrates metabolism. This Arabidopsis thaliana (Mouse-ear cress) protein is Phosphoglycerate mutase-like protein 1.